The sequence spans 114 residues: MVTKEQRRQKIKARVRGKISGTQEKPRLTVFRSNKQIYAQLIDDIAGRTLASASSLKLEMTGSKKEIAAKVGDEIAKAATEAGISTVVFDRNGYLFHGRIKELADAARKGGLKF.

This sequence belongs to the universal ribosomal protein uL18 family. As to quaternary structure, part of the 50S ribosomal subunit; part of the 5S rRNA/L5/L18/L25 subcomplex. Contacts the 5S and 23S rRNAs.

This is one of the proteins that bind and probably mediate the attachment of the 5S RNA into the large ribosomal subunit, where it forms part of the central protuberance. This Porphyromonas gingivalis (strain ATCC BAA-308 / W83) protein is Large ribosomal subunit protein uL18.